Here is a 96-residue protein sequence, read N- to C-terminus: Putative septation protein SpoVG (96 aa).

The protein belongs to the SpoVG family.

Functionally, could be involved in septation. This Phytoplasma australiense protein is Putative septation protein SpoVG.